The following is a 596-amino-acid chain: Elongation factor 4 (596 aa).

Residues 2–184 (KQIRNFSIIA…VIVAKIPPPE (183 aa)) enclose the tr-type G domain. GTP contacts are provided by residues 14-19 (DHGKST) and 131-134 (NKID).

The protein belongs to the TRAFAC class translation factor GTPase superfamily. Classic translation factor GTPase family. LepA subfamily.

Its subcellular location is the cell inner membrane. The enzyme catalyses GTP + H2O = GDP + phosphate + H(+). Functionally, required for accurate and efficient protein synthesis under certain stress conditions. May act as a fidelity factor of the translation reaction, by catalyzing a one-codon backward translocation of tRNAs on improperly translocated ribosomes. Back-translocation proceeds from a post-translocation (POST) complex to a pre-translocation (PRE) complex, thus giving elongation factor G a second chance to translocate the tRNAs correctly. Binds to ribosomes in a GTP-dependent manner. This Shewanella baltica (strain OS155 / ATCC BAA-1091) protein is Elongation factor 4.